A 237-amino-acid polypeptide reads, in one-letter code: Large ribosomal subunit protein uL1 (237 aa).

Belongs to the universal ribosomal protein uL1 family. As to quaternary structure, part of the 50S ribosomal subunit.

Functionally, binds directly to 23S rRNA. The L1 stalk is quite mobile in the ribosome, and is involved in E site tRNA release. In terms of biological role, protein L1 is also a translational repressor protein, it controls the translation of the L11 operon by binding to its mRNA. The sequence is that of Large ribosomal subunit protein uL1 from Synechococcus sp. (strain ATCC 27144 / PCC 6301 / SAUG 1402/1) (Anacystis nidulans).